The primary structure comprises 427 residues: MSAEPSRNPRTPPVSAVDIDGAAKRIAPVVTPTPLQLSDRLSAITGAAVYLKREDLQTVRSYKLRGAYNLLVQLTDEEIAAGVVCSSAGNHAQGVAYACRSLGVHGRVYVPAKTPKQKWDRIRYHGGAFIELIVGRSTYDLAAAAAVDDIERTGATLVPPYDDVRVIAGQGTIAVELLEQLNTEPDLVVVPVGGGGCIAGMTTYLAERTANTAVLGVEPAGAAAMMAALAAGEPVTLDYVDQFVDGAAVNRVGTLPYAALTAAGDMVSITTVDEGAVCTAMLDLYQNEGIIAEPAGALSVAGLLETDIEPGSTVVCLISGGNNDVLRYGEVLERSLIHLGLKHYFLVDFPQKPGALRRFLDEVLGPNDDITLFEYVKRNNRETGEALVGIQLGSAVDLDVLLARMQGTEMHVETLQPGSPAYRYLLL.

Lysine 63 bears the N6-(pyridoxal phosphate)lysine mark. Pyridoxal 5'-phosphate is bound by residues asparagine 90, 193–197, and serine 319; that span reads GGGGC. The 75-residue stretch at 343–417 folds into the ACT-like domain; it reads HYFLVDFPQK…TEMHVETLQP (75 aa).

It belongs to the serine/threonine dehydratase family. In terms of assembly, homotetramer. Pyridoxal 5'-phosphate serves as cofactor.

The catalysed reaction is L-threonine = 2-oxobutanoate + NH4(+). It participates in amino-acid biosynthesis; L-isoleucine biosynthesis; 2-oxobutanoate from L-threonine: step 1/1. Functionally, catalyzes the anaerobic formation of alpha-ketobutyrate and ammonia from threonine in a two-step reaction. The first step involved a dehydration of threonine and a production of enamine intermediates (aminocrotonate), which tautomerizes to its imine form (iminobutyrate). Both intermediates are unstable and short-lived. The second step is the nonenzymatic hydrolysis of the enamine/imine intermediates to form 2-ketobutyrate and free ammonia. In the low water environment of the cell, the second step is accelerated by RidA. The polypeptide is L-threonine dehydratase biosynthetic IlvA (ilvA) (Mycobacterium leprae (strain TN)).